A 79-amino-acid polypeptide reads, in one-letter code: UPF0154 protein SSP1415 (79 aa).

A helical membrane pass occupies residues 4–24 (WLAIVLIVLALILGLVGGFFL).

It belongs to the UPF0154 family.

Its subcellular location is the membrane. This chain is UPF0154 protein SSP1415, found in Staphylococcus saprophyticus subsp. saprophyticus (strain ATCC 15305 / DSM 20229 / NCIMB 8711 / NCTC 7292 / S-41).